The chain runs to 505 residues: Peroxisome proliferator-activated receptor gamma (505 aa).

O-linked (GlcNAc) threonine glycosylation occurs at Thr-84. Ser-112 carries the phosphoserine; by MAPK modification. The nuclear receptor DNA-binding region spans 136–210 (AIECRVCGDK…VGMSHNAIRF (75 aa)). 2 consecutive NR C4-type zinc fingers follow at residues 139 to 159 (CRVC…CEGC) and 176 to 198 (CDLN…FQKC). Residues 205–280 (HNAIRFGRMP…DKSPFVIYDM (76 aa)) are interaction with FAM120B. Residues 238-503 (DLRALAKHLY…HPLLQEIYKD (266 aa)) form the NR LBD domain. Lys-252 is covalently cross-linked (Glycyl lysine isopeptide (Lys-Gly) (interchain with G-Cter in ubiquitin)). The short motif at 495 to 503 (PLLQEIYKD) is the 9aaTAD element.

It belongs to the nuclear hormone receptor family. NR1 subfamily. Heterodimer with other nuclear receptors, such as RXRA. The heterodimer with the retinoic acid receptor RXRA is called adipocyte-specific transcription factor ARF6. Interacts with NCOA6 coactivator, leading to a strong increase in transcription of target genes. Interacts with coactivator PPARBP, leading to a mild increase in transcription of target genes. Interacts with NOCA7 in a ligand-inducible manner. Interacts with NCOA1 and NCOA2 LXXLL motifs. Interacts with ASXL1, ASXL2, DNTTIP2, FAM120B, MAP2K1/MEK1, NR0B2, PDPK1, PRDM16, PRMT2 and TGFB1I1. Interacts (when activated by agonist) with PPP5C. Interacts with HELZ2 and THRAP3; the interaction stimulates the transcriptional activity of PPARG. Interacts with PER2, the interaction is ligand dependent and blocks PPARG recruitment to target promoters. Interacts with NOCT. Interacts with FOXO1 (acetylated form). Interacts with ACTN4. Interacts (when in the liganded conformation) with GPS2. Interacts with CRY1 and CRY2 in a ligand-dependent manner. In the absence of hormonal ligand, interacts with TACC1. In macrophages, interacts with PAQR3 and STUB1; the interactions promote PPARG poylubiquitination and STUB1-mediated degradation. O-GlcNAcylation at Thr-84 reduces transcriptional activity in adipocytes. Post-translationally, phosphorylated in basal conditions and dephosphorylated when treated with the ligand. May be dephosphorylated by PPP5C. The phosphorylated Ser-112 form is recognized by PER2 and repressed, dephosphorylation at Ser-112 induces adipogenic activity. Ser-112 phosphorylation levels are reduced by 65% in brown adipose tissue compared to white adipose tissue. In terms of processing, ubiquitinated by E3 ubiquitin-protein ligase complex containing FBXO9; leading to proteasomal degradation. Ubiquitinated by E3 ubiquitin-protein ligase complex containing FBXO9; leading to proteasomal degradation. Ubiquitinated at Lys-252 by TRIM55 leading to proteasomal degradation. Ubiquitinated by E3 ubiquitin-protein ligase STUB1/CHIP; leading to proteasomal degradation. Highest expression in white and brown adipose tissue. Also found in liver, skeletal muscle, heart, adrenal gland, spleen, kidney and intestine. Isoform 2 is more abundant than isoform 1 in adipose tissue.

Its subcellular location is the nucleus. The protein localises to the cytoplasm. Its activity is regulated as follows. PDPK1 activates its transcriptional activity independently of its kinase activity. Functionally, nuclear receptor that binds peroxisome proliferators such as hypolipidemic drugs and fatty acids. Once activated by a ligand, the nuclear receptor binds to DNA specific PPAR response elements (PPRE) and modulates the transcription of its target genes, such as acyl-CoA oxidase. It therefore controls the peroxisomal beta-oxidation pathway of fatty acids. Key regulator of adipocyte differentiation and glucose homeostasis. ARF6 acts as a key regulator of the tissue-specific adipocyte P2 (aP2) enhancer. Acts as a critical regulator of gut homeostasis by suppressing NF-kappa-B-mediated pro-inflammatory responses. Plays a role in the regulation of cardiovascular circadian rhythms by regulating the transcription of BMAL1 in the blood vessels. The sequence is that of Peroxisome proliferator-activated receptor gamma (Pparg) from Mus musculus (Mouse).